The sequence spans 303 residues: Protoheme IX farnesyltransferase 2 (303 aa).

9 helical membrane-spanning segments follow: residues 29–49 (VVALMLLTVLVGMCLSVPGIV), 51–71 (LQPLVAGMAGIAMMAGSAAAF), 96–118 (ISTTKAVTFAVSLGSLGFVVLYT), 123–143 (LTAWLTFASLIGYALVYTAYL), 150–170 (NIVIGGLAGAMPPLLGWTAIT), 177–197 (ALLLVIIIFTWTPPHFWALAI), 223–243 (CILLYTILLAIACLLPVLVGM), 244–264 (CGPIYLVGSTVLSCGFIYKAW), and 281–301 (FSIYHLMVLFIVLLVDHYFWV).

Belongs to the UbiA prenyltransferase family. Protoheme IX farnesyltransferase subfamily.

It localises to the cell inner membrane. It catalyses the reaction heme b + (2E,6E)-farnesyl diphosphate + H2O = Fe(II)-heme o + diphosphate. Its pathway is porphyrin-containing compound metabolism; heme O biosynthesis; heme O from protoheme: step 1/1. Its function is as follows. Converts heme B (protoheme IX) to heme O by substitution of the vinyl group on carbon 2 of heme B porphyrin ring with a hydroxyethyl farnesyl side group. This is Protoheme IX farnesyltransferase 2 from Shewanella frigidimarina (strain NCIMB 400).